The primary structure comprises 743 residues: Isocitrate dehydrogenase [NADP] 2 (743 aa).

2 residues coordinate NADP(+): Asn87 and Ser89. Residues Ser134, Asn137, Arg141, Arg147, and Lys257 each coordinate D-threo-isocitrate. Residue Asn137 coordinates NADP(+). Residue Asp352 participates in Mg(2+) binding. Residues Tyr422 and Arg549 each contribute to the D-threo-isocitrate site. Mg(2+) is bound by residues Asp550 and Asp554. Ser587, His591, Arg602, Asp604, and Arg651 together coordinate NADP(+).

This sequence belongs to the monomeric-type IDH family. As to quaternary structure, monomer. Mg(2+) serves as cofactor. It depends on Mn(2+) as a cofactor.

It catalyses the reaction D-threo-isocitrate + NADP(+) = 2-oxoglutarate + CO2 + NADPH. In terms of biological role, catalyzes the oxidative decarboxylation of isocitrate to 2-oxoglutarate and carbon dioxide with the concomitant reduction of NADP(+). The sequence is that of Isocitrate dehydrogenase [NADP] 2 (icd2) from Colwellia maris.